We begin with the raw amino-acid sequence, 222 residues long: UPF0173 metal-dependent hydrolase Nther_2337 (222 aa).

The protein belongs to the UPF0173 family.

The polypeptide is UPF0173 metal-dependent hydrolase Nther_2337 (Natranaerobius thermophilus (strain ATCC BAA-1301 / DSM 18059 / JW/NM-WN-LF)).